Here is a 282-residue protein sequence, read N- to C-terminus: MSASLDLWNIPLRALNINVRKRLGLFLNPRNTVASDWMSVAENMGFSYLEIKNYEDCQDPTRKIYRTGKPLSRAQVGKLVSILDNVTRKDVVEDLRVLIEEDCKRYIERQNEPPVQVPEVDSCVPRTPERQGITLEDDPEGGIPELFDAFICYCQSDFDFVHEMIQQLEQTDHKLKLCVFDRDALPGSCVWTITSELIEKRCKRMVVVISDEYLDSDACDFQTKFALSLCPGARSKRLIPVKYKSMKKPFPSILRFLTVCDYPRPCTQSWFWVRLAKALSLP.

In terms of domain architecture, Death spans 22-99 (RLGLFLNPRN…DVVEDLRVLI (78 aa)). Residues 100–141 (EEDCKRYIERQNEPPVQVPEVDSCVPRTPERQGITLEDDPEG) form an intermediate domain region. Residues 117 to 138 (VPEVDSCVPRTPERQGITLEDD) form a disordered region. A TIR domain is found at 145-279 (ELFDAFICYC…WFWVRLAKAL (135 aa)).

It is found in the cytoplasm. In terms of biological role, adapter protein involved in the Toll-like receptor and IL-1 receptor signaling pathway in the innate immune response. This Oncorhynchus mykiss (Rainbow trout) protein is Myeloid differentiation primary response protein MyD88 (myd88).